The primary structure comprises 370 residues: UDP-N-acetylglucosamine--N-acetylmuramyl-(pentapeptide) pyrophosphoryl-undecaprenol N-acetylglucosamine transferase (370 aa).

UDP-N-acetyl-alpha-D-glucosamine is bound by residues 15–17 (TGG), Asn-129, Arg-170, Ser-200, Ile-253, and Gln-298.

This sequence belongs to the glycosyltransferase 28 family. MurG subfamily.

The protein resides in the cell inner membrane. The enzyme catalyses di-trans,octa-cis-undecaprenyl diphospho-N-acetyl-alpha-D-muramoyl-L-alanyl-D-glutamyl-meso-2,6-diaminopimeloyl-D-alanyl-D-alanine + UDP-N-acetyl-alpha-D-glucosamine = di-trans,octa-cis-undecaprenyl diphospho-[N-acetyl-alpha-D-glucosaminyl-(1-&gt;4)]-N-acetyl-alpha-D-muramoyl-L-alanyl-D-glutamyl-meso-2,6-diaminopimeloyl-D-alanyl-D-alanine + UDP + H(+). Its pathway is cell wall biogenesis; peptidoglycan biosynthesis. In terms of biological role, cell wall formation. Catalyzes the transfer of a GlcNAc subunit on undecaprenyl-pyrophosphoryl-MurNAc-pentapeptide (lipid intermediate I) to form undecaprenyl-pyrophosphoryl-MurNAc-(pentapeptide)GlcNAc (lipid intermediate II). In Salinibacter ruber (strain DSM 13855 / M31), this protein is UDP-N-acetylglucosamine--N-acetylmuramyl-(pentapeptide) pyrophosphoryl-undecaprenol N-acetylglucosamine transferase.